We begin with the raw amino-acid sequence, 133 residues long: uncharacterized protein (133 aa).

This is an uncharacterized protein from Methanothermobacter marburgensis (strain ATCC BAA-927 / DSM 2133 / JCM 14651 / NBRC 100331 / OCM 82 / Marburg) (Methanobacterium thermoautotrophicum).